The sequence spans 323 residues: Mitochondrial glutamate carrier 1 (323 aa).

3 Solcar repeats span residues 6 to 93, 101 to 214, and 223 to 312; these read ISLP…FRHQ, LTLL…LNQL, and SPFY…GIAE. The next 6 helical transmembrane spans lie at 12–32, 62–82, 107–127, 189–209, 223–243, and 292–312; these read LINGGIAGLIGVTCVFPIDLA, YFGMYRGAAVNLTLVTPEKAI, MLAGCGAGTCQVIVTTPMEML, GLGATLLRDVPFSVVYFPLFA, SPFYVSFLAGCVAGSAAAVAV, and ALVIAPLFGIAQVVYFLGIAE.

Belongs to the mitochondrial carrier (TC 2.A.29) family. In terms of tissue distribution, expressed at high levels in brain, liver, and pancreas.

The protein localises to the mitochondrion inner membrane. It carries out the reaction L-glutamate(in) + H(+)(in) = L-glutamate(out) + H(+)(out). In terms of biological role, mitochondrial glutamate/H(+) symporter. Responsible for the transport of glutamate from the cytosol into the mitochondrial matrix with the concomitant import of a proton. Plays a role in the control of glucose-stimulated insulin secretion. The chain is Mitochondrial glutamate carrier 1 from Homo sapiens (Human).